Here is a 356-residue protein sequence, read N- to C-terminus: MRRELLLEKIETYKAIMPWYVLDYYQSKLAVPYSFTTLYEYLKEYKRFFDWLMDADLTQAPKIADIDLSTLEHLTKKDLEAFVLYLRERPSLNTYSTKEGLSQTTINRTLSALSSLYKYLTEEVENDQGEPYFYRNVMKKVSTKKKKETLASRAENIKQKLFLGDETLAFLDYVDKEYEQKLSNRAKSSFRKNKERDLAIIALLLASGVRLSEAVNLDLKDVNLNMMIIEVIRKGGKRDSVNVAGFAKGYLESYLAVRQRRYKAEKQDLAFFLTEYRGVPNRMDASSIEKMVGKYSEDFKIRVTPHKLRHTLATRLYDATKSQVLVSHQLGHSSTQVTDLYTHIVNDEQKTALDNL.

Residues 16–121 enclose the Core-binding (CB) domain; it reads IMPWYVLDYY…ALSSLYKYLT (106 aa). Residues 169-354 enclose the Tyr recombinase domain; that stretch reads AFLDYVDKEY…VNDEQKTALD (186 aa). Active-site residues include arginine 210, lysine 234, histidine 306, arginine 309, and histidine 332. Tyrosine 341 acts as the O-(3'-phospho-DNA)-tyrosine intermediate in catalysis.

This sequence belongs to the 'phage' integrase family. XerS subfamily.

It is found in the cytoplasm. Its activity is regulated as follows. FtsK is required for recombination. Its function is as follows. Site-specific tyrosine recombinase, which acts by catalyzing the cutting and rejoining of the recombining DNA molecules. Essential to convert dimers of the bacterial chromosome into monomers to permit their segregation at cell division. The polypeptide is Tyrosine recombinase XerS (Streptococcus pyogenes serotype M12 (strain MGAS9429)).